The primary structure comprises 404 residues: Cysteine desulfurase IscS (404 aa).

Pyridoxal 5'-phosphate contacts are provided by residues Ala-75–Thr-76, Asn-155, Gln-183, and Thr-203–His-205. Lys-206 carries the post-translational modification N6-(pyridoxal phosphate)lysine. A pyridoxal 5'-phosphate-binding site is contributed by Thr-243. Cys-328 acts as the Cysteine persulfide intermediate in catalysis. Cys-328 contacts [2Fe-2S] cluster.

This sequence belongs to the class-V pyridoxal-phosphate-dependent aminotransferase family. NifS/IscS subfamily. In terms of assembly, homodimer. Forms a heterotetramer with IscU, interacts with other sulfur acceptors. Requires pyridoxal 5'-phosphate as cofactor.

The protein resides in the cytoplasm. It catalyses the reaction (sulfur carrier)-H + L-cysteine = (sulfur carrier)-SH + L-alanine. It participates in cofactor biosynthesis; iron-sulfur cluster biosynthesis. Its function is as follows. Master enzyme that delivers sulfur to a number of partners involved in Fe-S cluster assembly, tRNA modification or cofactor biosynthesis. Catalyzes the removal of elemental sulfur atoms from cysteine to produce alanine. Functions as a sulfur delivery protein for Fe-S cluster synthesis onto IscU, an Fe-S scaffold assembly protein, as well as other S acceptor proteins. This Cronobacter sakazakii (strain ATCC BAA-894) (Enterobacter sakazakii) protein is Cysteine desulfurase IscS.